We begin with the raw amino-acid sequence, 346 residues long: Protein U59 (346 aa).

Belongs to the herpesviridae U59/UL88 family.

The chain is Protein U59 from Elephantid herpesvirus 1 (isolate Asian elephant/Berlin/Kiba/1998) (EIHV-1).